The primary structure comprises 33 residues: uncharacterized protein (33 aa).

This is an uncharacterized protein from Archaeoglobus fulgidus (strain ATCC 49558 / DSM 4304 / JCM 9628 / NBRC 100126 / VC-16).